The primary structure comprises 316 residues: Protease HtpX homolog (316 aa).

Residues 16-36 (LFMALGFTIGGTGGAMIALVV) form a helical membrane-spanning segment. His130 contributes to the Zn(2+) binding site. Glu131 is a catalytic residue. His134 contacts Zn(2+). The next 2 membrane-spanning stretches (helical) occupy residues 145-165 (MTAT…FFGA) and 174-194 (LATI…QMAI). Glu199 provides a ligand contact to Zn(2+). The interval 285-316 (PNFAALSERRGSVSSVPRTRRRSSALDPNGRG) is disordered.

The protein belongs to the peptidase M48B family. Zn(2+) serves as cofactor.

It is found in the cell inner membrane. In Rhizorhabdus wittichii (strain DSM 6014 / CCUG 31198 / JCM 15750 / NBRC 105917 / EY 4224 / RW1) (Sphingomonas wittichii), this protein is Protease HtpX homolog.